The sequence spans 398 residues: Carbamoyl phosphate synthase small chain (398 aa).

The CPSase stretch occupies residues Met1 to Glu199. L-glutamine is bound by residues Ser54, Gly251, and Gly253. A Glutamine amidotransferase type-1 domain is found at His203–Glu391. Cys280 acts as the Nucleophile in catalysis. L-glutamine contacts are provided by Leu281, Gln284, Asn322, Gly324, and Phe325. Residues His364 and Glu366 contribute to the active site.

Belongs to the CarA family. Composed of two chains; the small (or glutamine) chain promotes the hydrolysis of glutamine to ammonia, which is used by the large (or ammonia) chain to synthesize carbamoyl phosphate. Tetramer of heterodimers (alpha,beta)4.

The catalysed reaction is hydrogencarbonate + L-glutamine + 2 ATP + H2O = carbamoyl phosphate + L-glutamate + 2 ADP + phosphate + 2 H(+). It catalyses the reaction L-glutamine + H2O = L-glutamate + NH4(+). It participates in amino-acid biosynthesis; L-arginine biosynthesis; carbamoyl phosphate from bicarbonate: step 1/1. Its pathway is pyrimidine metabolism; UMP biosynthesis via de novo pathway; (S)-dihydroorotate from bicarbonate: step 1/3. Functionally, small subunit of the glutamine-dependent carbamoyl phosphate synthetase (CPSase). CPSase catalyzes the formation of carbamoyl phosphate from the ammonia moiety of glutamine, carbonate, and phosphate donated by ATP, constituting the first step of 2 biosynthetic pathways, one leading to arginine and/or urea and the other to pyrimidine nucleotides. The small subunit (glutamine amidotransferase) binds and cleaves glutamine to supply the large subunit with the substrate ammonia. In Mesorhizobium japonicum (strain LMG 29417 / CECT 9101 / MAFF 303099) (Mesorhizobium loti (strain MAFF 303099)), this protein is Carbamoyl phosphate synthase small chain.